The primary structure comprises 71 residues: MSRHKYKLWMCIAKGKRGVGERNTFVPKCSYAPFCASEVLDQLLRGDNSIVYNFYLKNGSGSVYIGSVFLI.

This is an uncharacterized protein from Saccharomyces cerevisiae (strain ATCC 204508 / S288c) (Baker's yeast).